The sequence spans 277 residues: Multiple sugar-binding transport system permease protein MsmG (277 aa).

A run of 6 helical transmembrane segments spans residues 13-33 (YVLLTVGGILILIPLMVTVFS), 74-94 (VITVLSVLVVMLFIPAAAYSI), 110-130 (LLILGIFVPFQVIMIPITVMM), 141-161 (LIILYLTYAIPQTLFLYVGYI), 198-218 (TTLIINALWFWNDFMLPLLIL), and 243-263 (GPSFASYIVGIITITIVYLIF). Residues 69–263 (FWNSTVITVL…ITITIVYLIF (195 aa)) form the ABC transmembrane type-1 domain.

This sequence belongs to the binding-protein-dependent transport system permease family. MalFG subfamily.

Its subcellular location is the cell membrane. Functionally, involved in a binding protein-dependent transport system responsible for the uptake of melibiose, raffinose and isomaltotriose. This chain is Multiple sugar-binding transport system permease protein MsmG (msmG), found in Streptococcus mutans serotype c (strain ATCC 700610 / UA159).